A 240-amino-acid polypeptide reads, in one-letter code: Zinc finger CCCH domain-containing protein 52 (240 aa).

Disordered stretches follow at residues 1–37 (MDARKRGRPEAAASHNSNGGFKRSKQEMESISTGLGS) and 81–106 (SQVSRNMQGSGGPGGRFSGRGDPGSG). The segment at 36–64 (GSKSKPCTKFFSTSGCPFGDNCHFLHYVP) adopts a C3H1-type 1 zinc-finger fold. Residues 89–104 (GSGGPGGRFSGRGDPG) are compositionally biased toward gly residues. One can recognise a KH domain in the interval 113-177 (ASTSKISVDA…EQINVASGMV (65 aa)). Residues 205–232 (NYKTKICDRYSKGNCTYGDRCHFAHGES) form a C3H1-type 2 zinc finger.

The protein is Zinc finger CCCH domain-containing protein 52 of Arabidopsis thaliana (Mouse-ear cress).